A 466-amino-acid polypeptide reads, in one-letter code: Ribulose bisphosphate carboxylase large chain (466 aa).

Lysine 5 is modified (N6,N6,N6-trimethyllysine). Residues asparagine 114 and threonine 164 each coordinate substrate. The Proton acceptor role is filled by lysine 166. Lysine 168 is a substrate binding site. The Mg(2+) site is built by lysine 192, aspartate 194, and glutamate 195. At lysine 192 the chain carries N6-carboxylysine. Catalysis depends on histidine 285, which acts as the Proton acceptor. Substrate is bound by residues arginine 286, histidine 318, and serine 370.

This sequence belongs to the RuBisCO large chain family. Type I subfamily. As to quaternary structure, heterohexadecamer of 8 large chains and 8 small chains; disulfide-linked. The disulfide link is formed within the large subunit homodimers. The cofactor is Mg(2+). Post-translationally, the disulfide bond which can form in the large chain dimeric partners within the hexadecamer appears to be associated with oxidative stress and protein turnover.

The protein resides in the plastid. It localises to the chloroplast. It catalyses the reaction 2 (2R)-3-phosphoglycerate + 2 H(+) = D-ribulose 1,5-bisphosphate + CO2 + H2O. The enzyme catalyses D-ribulose 1,5-bisphosphate + O2 = 2-phosphoglycolate + (2R)-3-phosphoglycerate + 2 H(+). Its function is as follows. RuBisCO catalyzes two reactions: the carboxylation of D-ribulose 1,5-bisphosphate, the primary event in carbon dioxide fixation, as well as the oxidative fragmentation of the pentose substrate in the photorespiration process. Both reactions occur simultaneously and in competition at the same active site. This is Ribulose bisphosphate carboxylase large chain from Caltha palustris (Yellow marsh marigold).